The following is a 109-amino-acid chain: Spermidine export protein MdtI (109 aa).

The next 4 helical transmembrane spans lie at 6–26 (WVHAAWLALAIVLEIVANVFL), 36–56 (IFGLLSLAAVLAAFSALSQAV), 64–84 (AYALWGGFGIAATLAAGWILF), and 88–108 (LNRKGWIGLVLLLAGMIMVKL).

Belongs to the drug/metabolite transporter (DMT) superfamily. Small multidrug resistance (SMR) (TC 2.A.7.1) family. MdtI subfamily. As to quaternary structure, forms a complex with MdtJ.

The protein resides in the cell inner membrane. Functionally, catalyzes the excretion of spermidine. The protein is Spermidine export protein MdtI of Escherichia coli O139:H28 (strain E24377A / ETEC).